The chain runs to 294 residues: Probable endonuclease 4 (294 aa).

Zn(2+) contacts are provided by His-78, His-118, Glu-155, Asp-189, His-192, His-226, Asp-239, His-241, and Glu-271.

Belongs to the AP endonuclease 2 family. The cofactor is Zn(2+).

It carries out the reaction Endonucleolytic cleavage to 5'-phosphooligonucleotide end-products.. Its function is as follows. Endonuclease IV plays a role in DNA repair. It cleaves phosphodiester bonds at apurinic or apyrimidinic (AP) sites, generating a 3'-hydroxyl group and a 5'-terminal sugar phosphate. In Oleidesulfovibrio alaskensis (strain ATCC BAA-1058 / DSM 17464 / G20) (Desulfovibrio alaskensis), this protein is Probable endonuclease 4.